The sequence spans 170 residues: Protein-lysine myristoyltransferase HlyC (170 aa).

Active-site residues include histidine 23 and aspartate 92. Histidine 151 is a binding site for heme.

The protein belongs to the RTX toxin acyltransferase family. As to quaternary structure, monomer. Post-translationally, proteolytically cleaved by the protease systems ClpAP, ClpXP and FtsH, leading to its degradation.

Its subcellular location is the cytoplasm. It catalyses the reaction tetradecanoyl-[ACP] + L-lysyl-[protein] = N(6)-tetradecanoyl-L-lysyl-[protein] + holo-[ACP] + H(+). The acyltransferase activity is inhibited by heme. In terms of biological role, protein-lysine myristoyltransferase that catalyzes myristoylation of the protoxin (HlyA) at two internal lysine residues, thereby converting it to the active toxin. The polypeptide is Protein-lysine myristoyltransferase HlyC (Escherichia coli).